A 200-amino-acid polypeptide reads, in one-letter code: Holliday junction branch migration complex subunit RuvA (200 aa).

A domain I region spans residues 1 to 63 (MIASVRGEVL…EDSMTLYGFP (63 aa)). Residues 64 to 142 (DSESKELFGL…AVASTSGAVP (79 aa)) are domain II. The flexible linker stretch occupies residues 142 to 146 (PLGAG). A domain III region spans residues 147–200 (GGGSVRDQIVEALVGLGFPAKQAEQAADSVLAEAPESTTSTALRSALSLLGKTR).

This sequence belongs to the RuvA family. As to quaternary structure, homotetramer. Forms an RuvA(8)-RuvB(12)-Holliday junction (HJ) complex. HJ DNA is sandwiched between 2 RuvA tetramers; dsDNA enters through RuvA and exits via RuvB. An RuvB hexamer assembles on each DNA strand where it exits the tetramer. Each RuvB hexamer is contacted by two RuvA subunits (via domain III) on 2 adjacent RuvB subunits; this complex drives branch migration. In the full resolvosome a probable DNA-RuvA(4)-RuvB(12)-RuvC(2) complex forms which resolves the HJ.

Its subcellular location is the cytoplasm. The RuvA-RuvB-RuvC complex processes Holliday junction (HJ) DNA during genetic recombination and DNA repair, while the RuvA-RuvB complex plays an important role in the rescue of blocked DNA replication forks via replication fork reversal (RFR). RuvA specifically binds to HJ cruciform DNA, conferring on it an open structure. The RuvB hexamer acts as an ATP-dependent pump, pulling dsDNA into and through the RuvAB complex. HJ branch migration allows RuvC to scan DNA until it finds its consensus sequence, where it cleaves and resolves the cruciform DNA. The chain is Holliday junction branch migration complex subunit RuvA from Rhodococcus jostii (strain RHA1).